The sequence spans 426 residues: Glutamate-1-semialdehyde 2,1-aminomutase (426 aa).

An N6-(pyridoxal phosphate)lysine modification is found at K265.

This sequence belongs to the class-III pyridoxal-phosphate-dependent aminotransferase family. HemL subfamily. In terms of assembly, homodimer. Pyridoxal 5'-phosphate serves as cofactor.

It is found in the cytoplasm. The enzyme catalyses (S)-4-amino-5-oxopentanoate = 5-aminolevulinate. The protein operates within porphyrin-containing compound metabolism; protoporphyrin-IX biosynthesis; 5-aminolevulinate from L-glutamyl-tRNA(Glu): step 2/2. This Salmonella typhi protein is Glutamate-1-semialdehyde 2,1-aminomutase.